We begin with the raw amino-acid sequence, 208 residues long: 2-phospho-L-lactate guanylyltransferase (208 aa).

The protein belongs to the CofC family. In terms of assembly, homodimer.

It catalyses the reaction (2S)-2-phospholactate + GTP + H(+) = (2S)-lactyl-2-diphospho-5'-guanosine + diphosphate. The protein operates within cofactor biosynthesis; coenzyme F420 biosynthesis. Functionally, guanylyltransferase that catalyzes the activation of (2S)-2-phospholactate (2-PL) as (2S)-lactyl-2-diphospho-5'-guanosine, via the condensation of 2-PL with GTP. It is involved in the biosynthesis of coenzyme F420, a hydride carrier cofactor. The sequence is that of 2-phospho-L-lactate guanylyltransferase from Methanosarcina mazei (strain ATCC BAA-159 / DSM 3647 / Goe1 / Go1 / JCM 11833 / OCM 88) (Methanosarcina frisia).